A 281-amino-acid chain; its full sequence is uncharacterized protein (281 aa).

It is found in the plastid. Its subcellular location is the chloroplast. This is an uncharacterized protein from Euglena gracilis.